The chain runs to 566 residues: Urease subunit alpha (566 aa).

Residues 128–566 (GGIDTHIHWI…LPMAQRYFLF (439 aa)) enclose the Urease domain. Positions 133, 135, and 216 each coordinate Ni(2+). Lys216 carries the N6-carboxylysine modification. His218 provides a ligand contact to substrate. Residues His245 and His271 each coordinate Ni(2+). Residue His319 is the Proton donor of the active site. Residue Asp359 participates in Ni(2+) binding.

Belongs to the metallo-dependent hydrolases superfamily. Urease alpha subunit family. In terms of assembly, heterotrimer of UreA (gamma), UreB (beta) and UreC (alpha) subunits. Three heterotrimers associate to form the active enzyme. It depends on Ni cation as a cofactor. In terms of processing, carboxylation allows a single lysine to coordinate two nickel ions.

The protein resides in the cytoplasm. It carries out the reaction urea + 2 H2O + H(+) = hydrogencarbonate + 2 NH4(+). Its pathway is nitrogen metabolism; urea degradation; CO(2) and NH(3) from urea (urease route): step 1/1. The protein is Urease subunit alpha of Acinetobacter baylyi (strain ATCC 33305 / BD413 / ADP1).